The sequence spans 291 residues: tRNA dimethylallyltransferase (291 aa).

9-16 (GPTASGKT) is an ATP binding site. 11–16 (TASGKT) provides a ligand contact to substrate. An interaction with substrate tRNA region spans residues 34–37 (DSLQ).

This sequence belongs to the IPP transferase family. Monomer. The cofactor is Mg(2+).

It catalyses the reaction adenosine(37) in tRNA + dimethylallyl diphosphate = N(6)-dimethylallyladenosine(37) in tRNA + diphosphate. Its function is as follows. Catalyzes the transfer of a dimethylallyl group onto the adenine at position 37 in tRNAs that read codons beginning with uridine, leading to the formation of N6-(dimethylallyl)adenosine (i(6)A). The sequence is that of tRNA dimethylallyltransferase from Onion yellows phytoplasma (strain OY-M).